Here is a 421-residue protein sequence, read N- to C-terminus: Flap endonuclease 1 (421 aa).

The interval 1 to 109 (MGIKGLAKLL…HELIKRREKR (109 aa)) is N-domain. Aspartate 34 is a binding site for Mg(2+). DNA contacts are provided by arginine 47 and arginine 75. Mg(2+)-binding residues include aspartate 91, glutamate 163, glutamate 165, aspartate 184, and aspartate 186. The segment at 127 to 258 (EQDKQSKRLV…KTALKLIREH (132 aa)) is I-domain. Glutamate 163 is a DNA binding site. Glycine 236 and aspartate 238 together coordinate DNA. Position 238 (aspartate 238) interacts with Mg(2+). Positions 284-307 (KKLDAQSDDDDEEGVESPSKEENN) are disordered. Acidic residues predominate over residues 289 to 298 (QSDDDDEEGV). The interaction with PCNA stretch occupies residues 379-387 (PQTRMDSFF). Residues 398–421 (SAAKRKADAAKAKAAVSKKKTKKH) form a disordered region.

The protein belongs to the XPG/RAD2 endonuclease family. FEN1 subfamily. As to quaternary structure, interacts with PCNA. Three molecules of FEN1 bind to one PCNA trimer with each molecule binding to one PCNA monomer. PCNA stimulates the nuclease activity without altering cleavage specificity. Requires Mg(2+) as cofactor. Post-translationally, phosphorylated. Phosphorylation upon DNA damage induces relocalization to the nuclear plasma.

The protein resides in the nucleus. It is found in the nucleolus. It localises to the nucleoplasm. Its subcellular location is the mitochondrion. Functionally, structure-specific nuclease with 5'-flap endonuclease and 5'-3' exonuclease activities involved in DNA replication and repair. During DNA replication, cleaves the 5'-overhanging flap structure that is generated by displacement synthesis when DNA polymerase encounters the 5'-end of a downstream Okazaki fragment. It enters the flap from the 5'-end and then tracks to cleave the flap base, leaving a nick for ligation. Also involved in the long patch base excision repair (LP-BER) pathway, by cleaving within the apurinic/apyrimidinic (AP) site-terminated flap. Acts as a genome stabilization factor that prevents flaps from equilibrating into structures that lead to duplications and deletions. Also possesses 5'-3' exonuclease activity on nicked or gapped double-stranded DNA, and exhibits RNase H activity. Also involved in replication and repair of rDNA and in repairing mitochondrial DNA. This is Flap endonuclease 1 from Phaeodactylum tricornutum (strain CCAP 1055/1).